A 557-amino-acid chain; its full sequence is MAAQGFLLIATFLLVLMVLARPLGSGLARLINDIPLPGTTGVERVLFRALGVSDREMNWKQYLCAILGLNMLGLAVLFFMLLGQHYLPLNPQQLPGLSWDLALNTAVSFVTNTNWQSYSGETTLSYFSQMAGLTVQNFLSAASGIAVIFALIRAFTRQSMSTLGNAWVDLLRITLWVLVPVALLIALFFIQQGALQNFLPYQAVNTVEGAQQLLPMGPVASQEAIKMLGTNGGGFFNANSSHPFENPTALTNFVQMLAIFLIPTALCFAFGEVMGDRRQGRMLLWAMSVIFVICVGVVMWAEVQGNPHLLALGTDSSINMEGKESRFGVLVSSLFAVVTTAASCGAVIAMHDSFTALGGMVPMWLMQIGEVVFGGVGSGLYGMMLFVLLAVFIAGLMIGRTPEYLGKKIDVREMKLTALAILVTPTLVLMGAALAMMTDAGRSAMLNPGPHGFSEVLYAVSSAANNNGSAFAGLSANSPFWNCLLAFCMFVGRFGVIIPVMAIAGSLVSKKSQAASSGTLPTHGPLFVGLLIGTVLLVGALTFIPALALGPVAEYLS.

12 helical membrane passes run 5-25, 63-83, 132-152, 170-190, 253-273, 283-303, 329-349, 356-376, 379-399, 416-436, 484-504, and 526-546; these read GFLLIATFLLVLMVLARPLGS, LCAILGLNMLGLAVLFFMLLG, GLTVQNFLSAASGIAVIFALI, LLRITLWVLVPVALLIALFFI, FVQMLAIFLIPTALCFAFGEV, LLWAMSVIFVICVGVVMWAEV, VLVSSLFAVVTTAASCGAVIA, ALGGMVPMWLMQIGEVVFGGV, GLYGMMLFVLLAVFIAGLMIG, LTALAILVTPTLVLMGAALAM, LLAFCMFVGRFGVIIPVMAIA, and LFVGLLIGTVLLVGALTFIPA.

This sequence belongs to the KdpA family. As to quaternary structure, the system is composed of three essential subunits: KdpA, KdpB and KdpC.

It is found in the cell inner membrane. Its function is as follows. Part of the high-affinity ATP-driven potassium transport (or Kdp) system, which catalyzes the hydrolysis of ATP coupled with the electrogenic transport of potassium into the cytoplasm. This subunit binds the periplasmic potassium ions and delivers the ions to the membrane domain of KdpB through an intramembrane tunnel. This is Potassium-transporting ATPase potassium-binding subunit from Escherichia coli (strain K12 / MC4100 / BW2952).